We begin with the raw amino-acid sequence, 108 residues long: Large ribosomal subunit protein uL24 (108 aa).

The protein belongs to the universal ribosomal protein uL24 family. As to quaternary structure, part of the 50S ribosomal subunit.

One of two assembly initiator proteins, it binds directly to the 5'-end of the 23S rRNA, where it nucleates assembly of the 50S subunit. Its function is as follows. One of the proteins that surrounds the polypeptide exit tunnel on the outside of the subunit. The sequence is that of Large ribosomal subunit protein uL24 from Mycoplasma capricolum subsp. capricolum (strain California kid / ATCC 27343 / NCTC 10154).